A 379-amino-acid polypeptide reads, in one-letter code: tRNA-specific 2-thiouridylase MnmA (379 aa).

ATP is bound by residues 9–16 and Met-35; that span reads AMSGGVDS. The interaction with target base in tRNA stretch occupies residues 94–96; it reads NPD. Cys-99 serves as the catalytic Nucleophile. A disulfide bond links Cys-99 and Cys-195. Gly-123 contacts ATP. Residues 145 to 147 form an interaction with tRNA region; it reads KDQ. Cys-195 functions as the Cysteine persulfide intermediate in the catalytic mechanism. Residues 307 to 308 are interaction with tRNA; sequence RY.

It belongs to the MnmA/TRMU family.

The protein resides in the cytoplasm. It catalyses the reaction S-sulfanyl-L-cysteinyl-[protein] + uridine(34) in tRNA + AH2 + ATP = 2-thiouridine(34) in tRNA + L-cysteinyl-[protein] + A + AMP + diphosphate + H(+). Its function is as follows. Catalyzes the 2-thiolation of uridine at the wobble position (U34) of tRNA, leading to the formation of s(2)U34. The protein is tRNA-specific 2-thiouridylase MnmA of Xylella fastidiosa (strain M12).